The following is a 357-amino-acid chain: Aspartate-semialdehyde dehydrogenase (357 aa).

NADP(+) contacts are provided by Thr12, Gly13, Thr14, Val15, Ser37, Ser40, Leu84, and Asp85. Cys151 acts as the Acyl-thioester intermediate in catalysis. Gly183 is an NADP(+) binding site. Residue His247 is the Proton acceptor of the active site. A Phosphoserine modification is found at Ser323. Asn335 contacts NADP(+).

It belongs to the aspartate-semialdehyde dehydrogenase family.

Its subcellular location is the cytoplasm. It localises to the cytosol. It is found in the nucleus. It catalyses the reaction L-aspartate 4-semialdehyde + phosphate + NADP(+) = 4-phospho-L-aspartate + NADPH + H(+). The protein operates within amino-acid biosynthesis; L-methionine biosynthesis via de novo pathway; L-homoserine from L-aspartate: step 2/3. It functions in the pathway amino-acid biosynthesis; L-threonine biosynthesis; L-threonine from L-aspartate: step 2/5. Functionally, catalyzes the NADPH-dependent formation of L-aspartate 4-semialdehyde (L-ASA) by the reductive dephosphorylation of 4-phospho-L-aspartate. Mediates the second step in the biosynthesis of amino acids that derive from aspartate (the aspartate family of amino acids), including methioinine and threonine, the latter of which is a precursor to isoleucine. This is Aspartate-semialdehyde dehydrogenase from Schizosaccharomyces pombe (strain 972 / ATCC 24843) (Fission yeast).